The following is a 304-amino-acid chain: tRNA pseudouridine synthase B (304 aa).

D47 functions as the Nucleophile in the catalytic mechanism. Positions 85 to 105 are disordered; the sequence is TNTDDGEGEVTETSDARPSDD.

It belongs to the pseudouridine synthase TruB family. Type 1 subfamily.

The catalysed reaction is uridine(55) in tRNA = pseudouridine(55) in tRNA. Its function is as follows. Responsible for synthesis of pseudouridine from uracil-55 in the psi GC loop of transfer RNAs. In Dinoroseobacter shibae (strain DSM 16493 / NCIMB 14021 / DFL 12), this protein is tRNA pseudouridine synthase B.